The following is a 512-amino-acid chain: 23S rRNA (uracil(1939)-C(5))-methyltransferase RlmD (512 aa).

Low complexity predominate over residues methionine 1–threonine 14. The disordered stretch occupies residues methionine 1 to alanine 45. The segment covering glutamate 15–isoleucine 25 has biased composition (polar residues). A compositionally biased stretch (basic residues) spans serine 28 to leucine 42. The region spanning arginine 41 to asparagine 113 is the TRAM domain. [4Fe-4S] cluster-binding residues include cysteine 127, cysteine 133, cysteine 136, and cysteine 215. S-adenosyl-L-methionine-binding residues include glutamine 340, phenylalanine 369, asparagine 374, glutamate 393, aspartate 420, and aspartate 441. The Nucleophile role is filled by cysteine 467.

The protein belongs to the class I-like SAM-binding methyltransferase superfamily. RNA M5U methyltransferase family. RlmD subfamily.

The catalysed reaction is uridine(1939) in 23S rRNA + S-adenosyl-L-methionine = 5-methyluridine(1939) in 23S rRNA + S-adenosyl-L-homocysteine + H(+). Functionally, catalyzes the formation of 5-methyl-uridine at position 1939 (m5U1939) in 23S rRNA. This chain is 23S rRNA (uracil(1939)-C(5))-methyltransferase RlmD, found in Psychrobacter arcticus (strain DSM 17307 / VKM B-2377 / 273-4).